Consider the following 384-residue polypeptide: S-adenosylmethionine synthase (384 aa).

His15 contributes to the ATP binding site. Asp17 contacts Mg(2+). Glu43 contributes to the K(+) binding site. Positions 56 and 99 each coordinate L-methionine. A flexible loop region spans residues 99-109 (QSPDINQGVDR). Residues 164 to 166 (DAK), 230 to 231 (RF), Asp239, 245 to 246 (RK), Ala262, and Lys266 each bind ATP. Residue Asp239 coordinates L-methionine. Lys270 provides a ligand contact to L-methionine.

The protein belongs to the AdoMet synthase family. As to quaternary structure, homotetramer; dimer of dimers. Mg(2+) is required as a cofactor. It depends on K(+) as a cofactor.

It is found in the cytoplasm. The enzyme catalyses L-methionine + ATP + H2O = S-adenosyl-L-methionine + phosphate + diphosphate. It functions in the pathway amino-acid biosynthesis; S-adenosyl-L-methionine biosynthesis; S-adenosyl-L-methionine from L-methionine: step 1/1. Catalyzes the formation of S-adenosylmethionine (AdoMet) from methionine and ATP. The overall synthetic reaction is composed of two sequential steps, AdoMet formation and the subsequent tripolyphosphate hydrolysis which occurs prior to release of AdoMet from the enzyme. This is S-adenosylmethionine synthase from Salmonella gallinarum (strain 287/91 / NCTC 13346).